The primary structure comprises 486 residues: Bile acid receptor (486 aa).

A Glycyl lysine isopeptide (Lys-Gly) (interchain with G-Cter in SUMO1) cross-link involves residue Lys132. Positions 134-209 (DELCVVCGDR…MGMLAECMYT (76 aa)) form a DNA-binding region, nuclear receptor. Residues 137-157 (CVVCGDRASGYHYNALTCEGC) form an NR C4-type zinc finger. Phosphoserine; by PKC/PRKCA occurs at positions 145 and 164. An N6-acetyllysine; by EP300 modification is found at Lys167. The NR C4-type zinc-finger motif lies at 173–197 (CKNGGNCVMDMYMRRKCQECRLRKC). Lys220 is subject to N6-methyllysine; by SETD7. Lys227 is modified (N6-acetyllysine; by EP300). The 225-residue stretch at 262 to 486 (DQQTLLHFIM…PLLCEIWDVQ (225 aa)) folds into the NR LBD domain. Residue Lys289 forms a Glycyl lysine isopeptide (Lys-Gly) (interchain with G-Cter in SUMO1) linkage. Positions 345, 375, and 383 each coordinate chenodeoxycholate. Thr456 bears the Phosphothreonine; by PKC/PRKCZ mark. Residue His461 participates in chenodeoxycholate binding.

This sequence belongs to the nuclear hormone receptor family. NR1 subfamily. In terms of assembly, heterodimer (via C-terminus) with RXRA (via DBD); the heterodimerization enhances the binding affinity for LXXLL motifs from coactivators. Binds DNA predominantly as a heterodimer with RXRA. After activation by agonist binding interacts with coactivators. Interacts with NCOA1, NCOA2, PPARGC1A, CARM1, SETD7, PRMT1, GPS2, SMARCA4 and MED1. Interacts with EP300 and SMARCD1. Interacts with XRCC5 and XRCC6; decreasing NR1H4/FXR transactivation activity towards ABCB11/BSEP. Interacts with PAGR1 and NCOA6; indicative for an association with an MLL2/MLL3 complex (ASCOM). In terms of processing, acetylated by EP300. Lys-227 as is the major acetylation site for EP300; the dynamicly regulated acetylation inhibits heterodimerization with RXRA and transactivation activity. Deacetylated by SIRT1. Post-translationally, methylation may increase transactivation of target genes. Phosphorylation by PKC/PRKCA increases transactivation activity by promoting association with PPARGC1A. In terms of processing, sumoylated upon ligand binding. As to expression, liver and hepatocyte-related cells express mainly FXRalpha1-type isoforms with isoform 3 and isoform 4 in approximately equal proportions. In intestine and kidney mainly FXRalpha2-type isoforms are expressed with isoform 1 and isoform 2 in approximately equal proportions. Expressed in pancreatic beta cells and macrophages.

The protein resides in the nucleus. Ligand-activated transcription factor. Receptor for bile acids (BAs) such as chenodeoxycholic acid (CDCA), lithocholic acid, deoxycholic acid (DCA) and allocholic acid (ACA). Plays a essential role in BA homeostasis through the regulation of genes involved in BA synthesis, conjugation and enterohepatic circulation. Also regulates lipid and glucose homeostasis and is involved innate immune response. The FXR-RXR heterodimer binds predominantly to farnesoid X receptor response elements (FXREs) containing two inverted repeats of the consensus sequence 5'-AGGTCA-3' in which the monomers are spaced by 1 nucleotide (IR-1) but also to tandem repeat DR1 sites with lower affinity, and can be activated by either FXR or RXR-specific ligands. It is proposed that monomeric nuclear receptors such as NR5A2/LRH-1 bound to coregulatory nuclear responsive element (NRE) halfsites located in close proximity to FXREs modulate transcriptional activity. In the liver activates transcription of the corepressor NR0B2 thereby indirectly inhibiting CYP7A1 and CYP8B1 (involved in BA synthesis) implicating at least in part histone demethylase KDM1A resulting in epigenomic repression, and SLC10A1/NTCP (involved in hepatic uptake of conjugated BAs). Activates transcription of the repressor MAFG (involved in regulation of BA synthesis). Activates transcription of SLC27A5/BACS and BAAT (involved in BA conjugation), ABCB11/BSEP (involved in bile salt export) by directly recruiting histone methyltransferase CARM1, and ABCC2/MRP2 (involved in secretion of conjugated BAs) and ABCB4 (involved in secretion of phosphatidylcholine in the small intestine). Activates transcription of SLC27A5/BACS and BAAT (involved in BA conjugation), ABCB11/BSEP (involved in bile salt export) by directly recruiting histone methyltransferase CARM1, and ABCC2/MRP2 (involved in secretion of conjugated BAs) and ABCB4 (involved in secretion of phosphatidylcholine in the small intestine). In the intestine activates FGF19 expression and secretion leading to hepatic CYP7A1 repression. The function also involves the coordinated induction of hepatic KLB/beta-klotho expression. Regulates transcription of liver UGT2B4 and SULT2A1 involved in BA detoxification; binding to the UGT2B4 promoter seems to imply a monomeric transactivation independent of RXRA. Modulates lipid homeostasis by activating liver NR0B2/SHP-mediated repression of SREBF1 (involved in de novo lipogenesis), expression of PLTP (involved in HDL formation), SCARB1 (involved in HDL hepatic uptake), APOE, APOC1, APOC4, PPARA (involved in beta-oxidation of fatty acids), VLDLR and SDC1 (involved in the hepatic uptake of LDL and IDL remnants), and inhibiting expression of MTTP (involved in VLDL assembly. Increases expression of APOC2 (promoting lipoprotein lipase activity implicated in triglyceride clearance). Transrepresses APOA1 involving a monomeric competition with NR2A1 for binding to a DR1 element. Also reduces triglyceride clearance by inhibiting expression of ANGPTL3 and APOC3 (both involved in inhibition of lipoprotein lipase). Involved in glucose homeostasis by modulating hepatic gluconeogenesis through activation of NR0B2/SHP-mediated repression of respective genes. Modulates glycogen synthesis (inducing phosphorylation of glycogen synthase kinase-3). Modulates glucose-stimulated insulin secretion and is involved in insulin resistance. Involved in intestinal innate immunity. Plays a role in protecting the distal small intestine against bacterial overgrowth and preservation of the epithelial barrier. Down-regulates inflammatory cytokine expression in several types of immune cells including macrophages and mononuclear cells. Mediates trans-repression of TLR4-induced cytokine expression; the function seems to require its sumoylation and prevents N-CoR nuclear receptor corepressor clearance from target genes such as IL1B and NOS2. Involved in the TLR9-mediated protective mechanism in intestinal inflammation. Plays an anti-inflammatory role in liver inflammation; proposed to inhibit pro-inflammatory (but not antiapoptotic) NF-kappa-B signaling). Its function is as follows. Promotes transcriptional activation of target genes NR0B2/SHP (inducible by unconjugated CDCA), SLC51B/OSTB (inducible by unconjugated CDCA and DCA) and FABP6/IBAP; low activity for ABCB11/BSEP (inducible by unconjugated CDCA, DCA and ACA); not inducible by taurine- and glycine-amidated CDCA. Functionally, promotes transcriptional activation of target genes ABCB11/BSEP (inducible by unconjugated CDCA, DCA and ACA), NR0B2/SHP (inducible by unconjugated CDCA DCA and ACA), SLC51B/OSTB (inducible by unconjugated CDCA and DCA) and FABP6/IBAP; not inducible by taurine- and glycine-amidated CDCA. In terms of biological role, promotes transcriptional activation of target genes NR0B2/SHP (inducible by unconjugated CDCA), SLC51B/OSTB (inducible by unconjugated CDCA and DCA) and IBAP; low activity for ABCB11/BSEP (inducible by unconjugated CDCA, DCA and ACA); not inducible by taurine- and glycine-amidated CDCA. Promotes transcriptional activation of target genes ABCB11/BSEP (inducible by unconjugated CDCA, ACA and DCA), NR0B2/SHP (inducible by unconjugated CDCA, ACA and DCA), SLC51B/OSTB (inducible by unconjugated CDCA and DCA) and FABP6/IBAP; most efficient isoform compared to isoforms 1 to 3; not inducible by taurine- and glycine-amidated CDCA. The polypeptide is Bile acid receptor (NR1H4) (Homo sapiens (Human)).